The sequence spans 24 residues: Superoxide dismutase [Cu-Zn], chloroplastic (24 aa).

This sequence belongs to the Cu-Zn superoxide dismutase family. In terms of assembly, homodimer. Cu cation serves as cofactor. It depends on Zn(2+) as a cofactor.

The protein localises to the plastid. It localises to the chloroplast. The enzyme catalyses 2 superoxide + 2 H(+) = H2O2 + O2. In terms of biological role, destroys radicals which are normally produced within the cells and which are toxic to biological systems. The polypeptide is Superoxide dismutase [Cu-Zn], chloroplastic (Picea abies (Norway spruce)).